Consider the following 524-residue polypeptide: Apoptosis inhibitor 5 (524 aa).

Positions 2 to 360 are ARM-like and Heat-like helical repeats; the sequence is PTVEELYRNY…HQLGRKLPDF (359 aa). At Lys-251 the chain carries N6-acetyllysine. Positions 370-391 are leucine-zipper; the sequence is LKDFKIRLQYFARGLQVYIRQL. Thr-399 bears the Phosphothreonine mark. Residues 452–524 are disordered; that stretch reads GQKRASEDTT…RGNRSRGRLY (73 aa). The Nuclear localization signal motif lies at 454–475; the sequence is KRASEDTTSGSPPKKSSAGPKR. Residues Ser-462, Ser-464, and Ser-469 each carry the phosphoserine modification. Positions 462 to 472 are enriched in low complexity; that stretch reads SGSPPKKSSAG. The segment covering 487 to 497 has biased composition (polar residues); sequence KYSSNLGNFNY. Arg-500 is modified (omega-N-methylarginine).

The protein belongs to the API5 family. Monomer. Interacts with FGF2 and ACIN1. Post-translationally, acetylation at Lys-251 impairs antiapoptotic function. Expressed in all tissues tested, including heart, brain, placenta, lung, liver, skeletal muscle, kidney and pancreas. Highest levels in heart, pancreas and placenta. Highly expressed in several cancers. Preferentially expressed in squamous cell carcinoma versus adenocarcinoma in non-small cell lung cancer.

It is found in the nucleus. It localises to the cytoplasm. Antiapoptotic factor that may have a role in protein assembly. Negatively regulates ACIN1. By binding to ACIN1, it suppresses ACIN1 cleavage from CASP3 and ACIN1-mediated DNA fragmentation. Also known to efficiently suppress E2F1-induced apoptosis. Its depletion enhances the cytotoxic action of the chemotherapeutic drugs. The sequence is that of Apoptosis inhibitor 5 from Homo sapiens (Human).